The chain runs to 285 residues: Urease accessory protein UreD (285 aa).

It belongs to the UreD family. UreD, UreF and UreG form a complex that acts as a GTP-hydrolysis-dependent molecular chaperone, activating the urease apoprotein by helping to assemble the nickel containing metallocenter of UreC. The UreE protein probably delivers the nickel.

The protein localises to the cytoplasm. Required for maturation of urease via the functional incorporation of the urease nickel metallocenter. The protein is Urease accessory protein UreD of Cenarchaeum symbiosum (strain A).